A 571-amino-acid chain; its full sequence is Oxysterol-binding protein 11 (571 aa).

The disordered stretch occupies residues 1–73; the sequence is MSNFFKKLVK…IGEQIDTLDD (73 aa). Residues 33–42 show a composition bias toward polar residues; that stretch reads NGNQVVPDTA. Over residues 43–54 the composition is skewed to low complexity; sequence SSYSDDSNSLSD. Positions 387–420 form a coiled coil; it reads YLEREENKLANKEKNKIEEREREKRKTRESRKEI.

This sequence belongs to the OSBP family.

This Dictyostelium discoideum (Social amoeba) protein is Oxysterol-binding protein 11 (osbK).